We begin with the raw amino-acid sequence, 132 residues long: Small ribosomal subunit protein uS19 (132 aa).

This sequence belongs to the universal ribosomal protein uS19 family.

Protein S19 forms a complex with S13 that binds strongly to the 16S ribosomal RNA. The polypeptide is Small ribosomal subunit protein uS19 (rps19) (Pyrococcus horikoshii (strain ATCC 700860 / DSM 12428 / JCM 9974 / NBRC 100139 / OT-3)).